A 347-amino-acid polypeptide reads, in one-letter code: Selenide, water dikinase (347 aa).

Cys-17 is an active-site residue. ATP-binding positions include Lys-20 and 48 to 50; that span reads TRD. Residue Asp-51 participates in Mg(2+) binding. Residues Asp-68, Asp-91, and 139–141 contribute to the ATP site; that span reads GHS. Asp-91 is a Mg(2+) binding site. Residue Asp-227 coordinates Mg(2+).

It belongs to the selenophosphate synthase 1 family. Class I subfamily. As to quaternary structure, homodimer. Requires Mg(2+) as cofactor.

It carries out the reaction hydrogenselenide + ATP + H2O = selenophosphate + AMP + phosphate + 2 H(+). Its function is as follows. Synthesizes selenophosphate from selenide and ATP. This chain is Selenide, water dikinase, found in Enterobacter sp. (strain 638).